A 332-amino-acid chain; its full sequence is MGKIYASLKSIASYIPPTCISNVDFEKTLDTNDEWITKRTGIKTRYFALPSQQTSDLAYEAGKKAIERAGIEPKDIDAVIVATLSPDYLTMPSTACITSFKLGIENKAAFDISAACSGFVYLLSLAKSFIESGTYKQILIIGAEKTSSVLDFSDRSTCVLFGDGAGACVIGSTNDEKAAILGVNVSANGRYQDFLCTPRVHATFGATQAQEKQSFIQMKGNETFKVAVKTLVSEVKEILNTHHINPQDVSFFIPHQANLRIINAVGENLNFTPEQIVVSIQKYGNTSAASIPMAMNDLYEEKKLKYGDLMLLDALGGGLTWGSALVHFGGTN.

Active-site residues include cysteine 116 and histidine 255. Residues 256 to 260 are ACP-binding; that stretch reads QANLR. Residue asparagine 285 is part of the active site.

The protein belongs to the thiolase-like superfamily. FabH family. As to quaternary structure, homodimer.

The protein resides in the cytoplasm. It catalyses the reaction malonyl-[ACP] + acetyl-CoA + H(+) = 3-oxobutanoyl-[ACP] + CO2 + CoA. It functions in the pathway lipid metabolism; fatty acid biosynthesis. Its function is as follows. Catalyzes the condensation reaction of fatty acid synthesis by the addition to an acyl acceptor of two carbons from malonyl-ACP. Catalyzes the first condensation reaction which initiates fatty acid synthesis and may therefore play a role in governing the total rate of fatty acid production. Possesses both acetoacetyl-ACP synthase and acetyl transacylase activities. Its substrate specificity determines the biosynthesis of branched-chain and/or straight-chain of fatty acids. The polypeptide is Beta-ketoacyl-[acyl-carrier-protein] synthase III (Helicobacter hepaticus (strain ATCC 51449 / 3B1)).